Here is a 1263-residue protein sequence, read N- to C-terminus: DNA-directed RNA polymerase subunit beta (1263 aa).

It belongs to the RNA polymerase beta chain family. In terms of assembly, the RNAP catalytic core consists of 2 alpha, 1 beta, 1 beta' and 1 omega subunit. When a sigma factor is associated with the core the holoenzyme is formed, which can initiate transcription.

It carries out the reaction RNA(n) + a ribonucleoside 5'-triphosphate = RNA(n+1) + diphosphate. In terms of biological role, DNA-dependent RNA polymerase catalyzes the transcription of DNA into RNA using the four ribonucleoside triphosphates as substrates. This is DNA-directed RNA polymerase subunit beta from Thermotoga petrophila (strain ATCC BAA-488 / DSM 13995 / JCM 10881 / RKU-1).